The primary structure comprises 245 residues: Putative binding protein HI_1525 (245 aa).

The first 19 residues, 1 to 19, serve as a signal peptide directing secretion; that stretch reads MKKLVAVTSMILTTFSVQA. Molybdate-binding residues include Ser-56 and Val-163.

The protein belongs to the bacterial solute-binding protein ModA family.

The protein resides in the periplasm. In terms of biological role, probably involved in the binding-dependent system. The chain is Putative binding protein HI_1525 from Haemophilus influenzae (strain ATCC 51907 / DSM 11121 / KW20 / Rd).